A 1210-amino-acid polypeptide reads, in one-letter code: Histone-lysine N-methyltransferase EHMT2 (1210 aa).

Positions 1–23 are enriched in low complexity; that stretch reads MAAAAGAAAAAAAEGEAPAEMGA. Disordered regions lie at residues 1-262 and 280-386; these read MAAA…LEEW and DERV…EYME. A2 is subject to N-acetylalanine. Positions 26–38 are enriched in basic and acidic residues; it reads LEKETRGATERVH. S40 is subject to Phosphoserine. T44 carries the phosphothreonine modification. Residue S47 is modified to Phosphoserine. The segment covering 105 to 128 has biased composition (low complexity); the sequence is GRILLGHATKSFPSSPSKGGSCPS. Position 140 is a phosphoserine (S140). A compositionally biased stretch (low complexity) spans 155-165; that stretch reads PGAQGAAAAGS. S173 is subject to Phosphoserine. Position 185 is an N6,N6,N6-trimethyllysine; by EHMT2; alternate (K185). K185 carries the post-translational modification N6,N6-dimethyllysine; by EHMT2; alternate. The segment covering 198-216 has biased composition (basic and acidic residues); that stretch reads PEKRPPEIQHFRMSDDVHS. Glycyl lysine isopeptide (Lys-Gly) (interchain with G-Cter in SUMO2) cross-links involve residues K219 and K229. Residues S232, S242, and S246 each carry the phosphoserine modification. Over residues 280–291 the composition is skewed to basic and acidic residues; it reads DERVDSDSKSEV. A compositionally biased stretch (acidic residues) spans 298-327; sequence LSEEEEEEEEEEEEEEEEEEEEEEEEDEES. The segment covering 338 to 347 has biased composition (basic residues); that stretch reads GRRKAKKKWR. S350, S412, and S413 each carry phosphoserine. The interval 548 to 608 is disordered; sequence IPRGDGVTPP…LADTIDSSGP (61 aa). T555 carries the phosphothreonine modification. S569 is modified (phosphoserine). Residue K634 forms a Glycyl lysine isopeptide (Lys-Gly) (interchain with G-Cter in SUMO2) linkage. 7 ANK repeats span residues 649–678, 684–713, 717–746, 750–780, 784–813, 817–846, and 850–879; these read FHPRQLYLSVKQGELQKVILMLLDNLDPNF, SKRTPLHAAAQKGSVEICHVLLQAGANINA, QQRTPLMEAVVNNHLEVARYMVQRGGCVYS, DGSTCLHHAAKIGNLEMVSLLLSTGQVDVNA, GGWTPIIWAAEHKHIEVIRMLLTRGADVTL, EENICLHWASFTGSAAIAEVLLNARCDLHA, and HGDTPLHIAARESYHDCVLLFLSRGANPEL. Residues 817-819 form a histone H3K9me binding region; it reads EEN. A Pre-SET domain is found at 972-1035; the sequence is QHCTCVDDCS…NCKNRVVQSG (64 aa). Residues C974, C976, C980, C985, C987, C1017, C1021, C1023, and C1027 each contribute to the Zn(2+) site. Residues 1038–1155 form the SET domain; that stretch reads VRLQLYRTAK…TGEELGFDYG (118 aa). Residues 1048–1050, Y1085, and 1112–1113 each bind S-adenosyl-L-methionine; these read MGW and NH. Residues 1074 to 1093 are interaction with histone H3; sequence DAEADVREDDSYLFDLDNKD. C1115 is a binding site for Zn(2+). The interval 1154–1157 is interaction with histone H3; the sequence is YGDR. Residues 1164–1180 enclose the Post-SET domain; sequence KYFTCQCGSEKCKHSAE. C1168 lines the Zn(2+) pocket. Q1169 is an S-adenosyl-L-methionine binding site. Residues C1170 and C1175 each coordinate Zn(2+). Residue S1204 is modified to Phosphoserine. A Phosphothreonine modification is found at T1210.

This sequence belongs to the class V-like SAM-binding methyltransferase superfamily. Histone-lysine methyltransferase family. Suvar3-9 subfamily. Heterodimer; heterodimerizes with EHMT1/GLP. Interacts with GFI1B and WIZ. Part of the E2F6.com-1 complex in G0 phase composed of E2F6, MGA, MAX, TFDP1, CBX3, BAT8, EHMT1, RING1, RNF2, MBLR, L3MBTL2 and YAF2. Part of a complex composed of TRIM28, HDAC1, HDAC2 and EHMT2. Interacts with UHRF1. Interacts with CDYL. Interacts with REST only in the presence of CDYL. Part of a complex containing at least CDYL, REST, WIZ, SETB1, EHMT1 and EHMT2. Interacts with PRDM9 and CDYL; interaction only takes place when PRDM9 is bound to hotspot DNA. Interacts with SMYD5. Methylated at Lys-185; automethylated. In terms of tissue distribution, expressed in all tissues examined, with high levels in fetal liver, thymus, lymph node, spleen and peripheral blood leukocytes and lower level in bone marrow.

Its subcellular location is the nucleus. The protein localises to the chromosome. The enzyme catalyses N(6)-methyl-L-lysyl(9)-[histone H3] + S-adenosyl-L-methionine = N(6),N(6)-dimethyl-L-lysyl(9)-[histone H3] + S-adenosyl-L-homocysteine + H(+). It carries out the reaction L-lysyl(9)-[histone H3] + S-adenosyl-L-methionine = N(6)-methyl-L-lysyl(9)-[histone H3] + S-adenosyl-L-homocysteine + H(+). Histone methyltransferase that specifically mono- and dimethylates 'Lys-9' of histone H3 (H3K9me1 and H3K9me2, respectively) in euchromatin. H3K9me represents a specific tag for epigenetic transcriptional repression by recruiting HP1 proteins to methylated histones. Also mediates monomethylation of 'Lys-56' of histone H3 (H3K56me1) in G1 phase, leading to promote interaction between histone H3 and PCNA and regulating DNA replication. Also weakly methylates 'Lys-27' of histone H3 (H3K27me). Also required for DNA methylation, the histone methyltransferase activity is not required for DNA methylation, suggesting that these 2 activities function independently. Probably targeted to histone H3 by different DNA-binding proteins like E2F6, MGA, MAX and/or DP1. May also methylate histone H1. In addition to the histone methyltransferase activity, also methylates non-histone proteins: mediates dimethylation of 'Lys-373' of p53/TP53. Also methylates CDYL, WIZ, ACIN1, DNMT1, HDAC1, ERCC6, KLF12 and itself. The polypeptide is Histone-lysine N-methyltransferase EHMT2 (EHMT2) (Homo sapiens (Human)).